A 380-amino-acid polypeptide reads, in one-letter code: Histidinol-phosphate aminotransferase (380 aa).

K235 bears the N6-(pyridoxal phosphate)lysine mark.

This sequence belongs to the class-II pyridoxal-phosphate-dependent aminotransferase family. Histidinol-phosphate aminotransferase subfamily. In terms of assembly, homodimer. The cofactor is pyridoxal 5'-phosphate.

It carries out the reaction L-histidinol phosphate + 2-oxoglutarate = 3-(imidazol-4-yl)-2-oxopropyl phosphate + L-glutamate. The protein operates within amino-acid biosynthesis; L-histidine biosynthesis; L-histidine from 5-phospho-alpha-D-ribose 1-diphosphate: step 7/9. This is Histidinol-phosphate aminotransferase from Rhodococcus opacus (strain B4).